The primary structure comprises 492 residues: UTP--glucose-1-phosphate uridylyltransferase (492 aa).

UTP contacts are provided by residues 110–113 (LNGG), Lys-124, Gln-183, and Gly-210. 112-113 (GG) contributes to the substrate binding site. Lys-124 contributes to the Mg(2+) binding site. Residues His-211 and 239-241 (NID) each bind substrate. Residues Asp-241 and Lys-379 each coordinate UTP. Asp-241 serves as a coordination point for Mg(2+). Lys-379 is a catalytic residue. Residues 441–492 (VLTVSGNVLFGKNVVLKGTVIILADEKSKICVPDGSVLEDNIIYGNLPIIDH) are oligomerization.

This sequence belongs to the UDPGP type 1 family. As to quaternary structure, homooctamer.

It catalyses the reaction alpha-D-glucose 1-phosphate + UTP + H(+) = UDP-alpha-D-glucose + diphosphate. In terms of biological role, plays a central role as a glucosyl donor in cellular metabolic pathways. This chain is UTP--glucose-1-phosphate uridylyltransferase (UGP1), found in Encephalitozoon cuniculi (strain GB-M1) (Microsporidian parasite).